The primary structure comprises 424 residues: Gamma-glutamyl phosphate reductase (424 aa).

A disordered region spans residues 1 to 27 (MSVEAQSRSGAVDTQEPADLREQVHSA).

Belongs to the gamma-glutamyl phosphate reductase family.

The protein resides in the cytoplasm. It catalyses the reaction L-glutamate 5-semialdehyde + phosphate + NADP(+) = L-glutamyl 5-phosphate + NADPH + H(+). It functions in the pathway amino-acid biosynthesis; L-proline biosynthesis; L-glutamate 5-semialdehyde from L-glutamate: step 2/2. Functionally, catalyzes the NADPH-dependent reduction of L-glutamate 5-phosphate into L-glutamate 5-semialdehyde and phosphate. The product spontaneously undergoes cyclization to form 1-pyrroline-5-carboxylate. This is Gamma-glutamyl phosphate reductase from Mycolicibacterium smegmatis (strain ATCC 700084 / mc(2)155) (Mycobacterium smegmatis).